The chain runs to 299 residues: NADH-cytochrome b5 reductase 2 (299 aa).

The chain crosses the membrane as a helical span at residues 13 to 35 (SFKVLAPFAAAVGSVGIAYQYST). An FAD-binding FR-type domain is found at 50–154 (DEWIDLKLAK…KGPVVKWKWE (105 aa)). 157-192 (QYKSIALIGGGTGITPLYQLMHEITKNPEDKTKVNL) provides a ligand contact to FAD.

This sequence belongs to the flavoprotein pyridine nucleotide cytochrome reductase family. It depends on FAD as a cofactor.

It localises to the mitochondrion outer membrane. The enzyme catalyses 2 Fe(III)-[cytochrome b5] + NADH = 2 Fe(II)-[cytochrome b5] + NAD(+) + H(+). In terms of biological role, may mediate the reduction of outer membrane cytochrome b5. The polypeptide is NADH-cytochrome b5 reductase 2 (MCR1) (Debaryomyces hansenii (strain ATCC 36239 / CBS 767 / BCRC 21394 / JCM 1990 / NBRC 0083 / IGC 2968) (Yeast)).